Reading from the N-terminus, the 744-residue chain is Prestin (744 aa).

Over Met1–Lys75 the chain is Cytoplasmic. A helical membrane pass occupies residues Phe76–Ala105. The Extracellular segment spans residues Ala106–Pro108. A helical membrane pass occupies residues Pro109–Phe126. At Gly127–Phe137 the chain is on the cytoplasmic side. Residues Ala138–Leu151 traverse the membrane as a helical segment. Topologically, residues Val152–Thr168 are extracellular. The Involved in motor function motif lies at Ile158–Thr168. 2 N-linked (GlcNAc...) asparagine glycosylation sites follow: Asn163 and Asn166. Residues Glu169–Cys196 traverse the membrane as a helical segment. Residues Arg197 to Thr206 are Cytoplasmic-facing. The helical transmembrane segment at Glu207–Phe230 threads the bilayer. Over Gly231–Phe241 the chain is Extracellular. Residues Ser242–Asn253 constitute an intramembrane region (helical). Residues Val254–Asn258 lie on the Extracellular side of the membrane. Residues Val259–Phe282 form a helical membrane-spanning segment. The Cytoplasmic segment spans residues Lys283–Pro291. A helical membrane pass occupies residues Leu292–Phe307. Residues Asn308–Asp332 lie on the Extracellular side of the membrane. Residues Thr333 to Tyr367 form a helical membrane-spanning segment. The Cytoplasmic segment spans residues Gln368 to Asp370. Residues Gly371–Phe388 form a helical membrane-spanning segment. The Extracellular segment spans residues Gln389–Ser396. The helical transmembrane segment at Leu397 to Thr406 threads the bilayer. Salicylate is bound at residue Ser398. The Cytoplasmic segment spans residues Gly407 to Thr410. The chain crosses the membrane as a helical span at residues Gln411–Phe432. At Glu433–Pro436 the chain is on the extracellular side. Residues Gln437–Thr464 traverse the membrane as a helical segment. Ser465 is a topological domain (cytoplasmic). A helical transmembrane segment spans residues Lys466–Phe481. The Extracellular segment spans residues Leu482–Gly483. The helical transmembrane segment at Leu484–Gln504 threads the bilayer. An extended region for STAS domain region spans residues Ser505 to Ala718. Topologically, residues Ser505–Ala744 are cytoplasmic. The STAS domain occupies Ala525–Ser713. Residues Ala720–Ala744 form a disordered region.

It belongs to the SLC26A/SulP transporter (TC 2.A.53) family. In terms of assembly, homodimer. Interacts (via STAS domain) with CALM; this interaction is calcium-dependent and the STAS domain interacts with only one lobe of CALM which is an elongated conformation. Interacts with MYH1. As to expression, expressed in the outer hair cells (OHC) of the organ of Corti of the inner ear. Also weak expression in brain and testis. Very weakly expressed in heart, spleen, muscle and lactating mammary glands. Expressed in cardiac myocytes (at protein level), both in the surface sarcolemma and along the t-tubule. Weakly expressed in skeletal muscle cells (at protein level).

The protein localises to the lateral cell membrane. It catalyses the reaction 2 hydrogencarbonate(in) + chloride(out) = 2 hydrogencarbonate(out) + chloride(in). In terms of biological role, voltage-sensitive motor protein that drives outer hair cell (OHC) electromotility (eM) and participates in sound amplification in the hearing organ. Converts changes in the transmembrane electric potential into mechanical displacements resulting in the coupling of its expansion to movement of a charged voltage sensor across the lipid membrane. The nature of the voltage sensor is not completely clear, and two models compete. In the first model, acts as an incomplete transporter where intracellular chloride anion acts as extrinsic voltage sensor that drives conformational change in the protein which is sufficient to produce a length change in the plane of the membrane and hence in the length of the OHC. The second model in which multiple charged amino acid residues are distributed at the intracellular and extracellular membrane interfaces that form an intrinsic voltage sensor, whose movement produces the non-linear capacitance (NLC). However, the effective voltage sensor may be the result of a hybrid voltage sensor, assembled from intrinsic charge (charged residues) and extrinsic charge (bound anion). Notably, binding of anions to the anion-binding pocket partially neutralizes the intrinsic positive charge rather than to form an electrically negative sensor, therefore remaining charge may serve as voltage sensor that, after depolarization, moves from down (expanded state) to up (contracted) conformation, which is accompanied by an eccentric contraction of the intermembrane cross-sectional area of the protein as well as a major increase in the hydrophobic thickness of the protein having as consequences the plasma membrane thickening and the cell contraction after membrane depolarization. The anion-binding pocket transits from the inward-open (Down) state, where it is exposed toward the intracellular solvent in the absence of anion, to the occluded (Up) state upon anion binding. Salicylate competes for the anion-binding site and inhibits the voltage-sensor movement, and therefore inhibits the charge transfer and electromotility by displacing Cl(-) from the anion-binding site and by preventing the structural transitions to the contracted state. In addition, can act as a weak Cl(-)/HCO3(-) antiporter across the cell membrane and so regulate the intracellular pH of the outer hair cells (OHCs), while firstly found as being unable to mediate electrogenic anion transport. Moreover, supports a role in cardiac mechanical amplification serving as an elastic element to enhance the actomyosin- based sarcomere contraction system. This is Prestin from Mus musculus (Mouse).